We begin with the raw amino-acid sequence, 441 residues long: Amino-acid acetyltransferase (441 aa).

The N-acetyltransferase domain occupies 295–434 (EQVRRATIND…QALYNYQRRS (140 aa)).

This sequence belongs to the acetyltransferase family. ArgA subfamily. In terms of assembly, homohexamer.

The protein localises to the cytoplasm. The catalysed reaction is L-glutamate + acetyl-CoA = N-acetyl-L-glutamate + CoA + H(+). The protein operates within amino-acid biosynthesis; L-arginine biosynthesis; N(2)-acetyl-L-ornithine from L-glutamate: step 1/4. The chain is Amino-acid acetyltransferase from Serratia proteamaculans (strain 568).